Here is a 537-residue protein sequence, read N- to C-terminus: Serendipity locus protein alpha (537 aa).

It is found in the cytoplasm. It localises to the cell membrane. Required for the cellularization of the syncytial blastoderm embryo. Involved in the localization of the actin filaments just prior to and during plasma membrane invagination. Sry-alpha together with nullo and bnk may provide auxiliary functions, by acting both to stabilize a large and dynamic microfilament structure and regulate its functions. The chain is Serendipity locus protein alpha (Sry-alpha) from Drosophila virilis (Fruit fly).